The primary structure comprises 266 residues: HTH-type transcriptional regulator MurR (266 aa).

Positions 1 to 77 (MLYLTKIRNA…MALIGEYSAS (77 aa)) constitute an HTH rpiR-type domain. The segment at residues 37–56 (SRQMAKQLGISQSSIVKFAQ) is a DNA-binding region (H-T-H motif). The region spanning 128 to 266 (IIEVISKAPF…LLFVGLVQHQ (139 aa)) is the SIS domain.

Homotetramer.

The protein operates within amino-sugar metabolism; N-acetylmuramate degradation [regulation]. Represses the expression of the murPQ operon involved in the uptake and degradation of N-acetylmuramic acid (MurNAc). Binds to two adjacent inverted repeats within the operator region. MurNAc 6-phosphate, the substrate of MurQ, is the specific inducer that weakens binding of MurR to the operator. The polypeptide is HTH-type transcriptional regulator MurR (Shigella flexneri serotype 5b (strain 8401)).